The following is a 151-amino-acid chain: Lipoprotein signal peptidase (151 aa).

A run of 3 helical transmembrane segments spans residues 33–53, 58–78, and 87–107; these read VIPDFFHLTYVLNPGAAFGLL, WIFIPAAIIVCAGIIYAQFKI, and LTLGLIGGGALGNLYDRLFIG. Residues Asp-111 and Asp-126 contribute to the active site. A helical membrane pass occupies residues 120-140; the sequence is FVFNFADSAIVVGVGLLMILM.

This sequence belongs to the peptidase A8 family.

It is found in the cell membrane. It catalyses the reaction Release of signal peptides from bacterial membrane prolipoproteins. Hydrolyzes -Xaa-Yaa-Zaa-|-(S,diacylglyceryl)Cys-, in which Xaa is hydrophobic (preferably Leu), and Yaa (Ala or Ser) and Zaa (Gly or Ala) have small, neutral side chains.. Its pathway is protein modification; lipoprotein biosynthesis (signal peptide cleavage). This protein specifically catalyzes the removal of signal peptides from prolipoproteins. The polypeptide is Lipoprotein signal peptidase (Desulfitobacterium hafniense (strain DSM 10664 / DCB-2)).